Reading from the N-terminus, the 415-residue chain is Polyketide biosynthesis malonyl-ACP decarboxylase PksF (415 aa).

Residues 6 to 407 form the Ketosynthase family 3 (KS3) domain; it reads LPEVVVTGVG…GMNTAVCIQN (402 aa).

This sequence belongs to the thiolase-like superfamily. Beta-ketoacyl-ACP synthases family.

The protein resides in the cytoplasm. It catalyses the reaction malonyl-[ACP] + H(+) = acetyl-[ACP] + CO2. The protein operates within antibiotic biosynthesis; bacillaene biosynthesis. Functionally, involved in some intermediate steps for the synthesis of the antibiotic polyketide bacillaene which is involved in secondary metabolism. It decarboxylates selectively the malonyl group attached on the acyl-carrier-protein AcpK (Mal-AcpK). This is Polyketide biosynthesis malonyl-ACP decarboxylase PksF (pksF) from Bacillus subtilis (strain 168).